The primary structure comprises 744 residues: Potassium-transporting ATPase ATP-binding subunit (744 aa).

A run of 4 helical transmembrane segments spans residues 80–100 (PVMF…VMAL), 108–128 (AGFI…ANVA), 265–285 (LALT…TVTL), and 310–330 (VLVA…LSAI). Asp-363 (4-aspartylphosphate intermediate) is an active-site residue. ATP-binding positions include Asp-400, Glu-404, 435-442 (FSAQTRMS), and Lys-457. Mg(2+) is bound by residues Asp-580 and Asp-584. The next 3 membrane-spanning stretches (helical) occupy residues 650-670 (FAII…LNVM), 678-698 (AVMS…PLAL), and 724-744 (LLLP…MGWV).

It belongs to the cation transport ATPase (P-type) (TC 3.A.3) family. Type IA subfamily. In terms of assembly, the system is composed of three essential subunits: KdpA, KdpB and KdpC.

The protein localises to the cell inner membrane. The enzyme catalyses K(+)(out) + ATP + H2O = K(+)(in) + ADP + phosphate + H(+). In terms of biological role, part of the high-affinity ATP-driven potassium transport (or Kdp) system, which catalyzes the hydrolysis of ATP coupled with the electrogenic transport of potassium into the cytoplasm. This subunit is responsible for energy coupling to the transport system and for the release of the potassium ions to the cytoplasm. This is Potassium-transporting ATPase ATP-binding subunit from Ralstonia nicotianae (strain ATCC BAA-1114 / GMI1000) (Ralstonia solanacearum).